Here is a 269-residue protein sequence, read N- to C-terminus: Indole-3-glycerol phosphate synthase (269 aa).

The protein belongs to the TrpC family.

It catalyses the reaction 1-(2-carboxyphenylamino)-1-deoxy-D-ribulose 5-phosphate + H(+) = (1S,2R)-1-C-(indol-3-yl)glycerol 3-phosphate + CO2 + H2O. The protein operates within amino-acid biosynthesis; L-tryptophan biosynthesis; L-tryptophan from chorismate: step 4/5. In Rhodococcus jostii (strain RHA1), this protein is Indole-3-glycerol phosphate synthase.